Here is a 101-residue protein sequence, read N- to C-terminus: Urease subunit gamma (101 aa).

It belongs to the urease gamma subunit family. Heterotrimer of UreA (gamma), UreB (beta) and UreC (alpha) subunits. Three heterotrimers associate to form the active enzyme.

It is found in the cytoplasm. It carries out the reaction urea + 2 H2O + H(+) = hydrogencarbonate + 2 NH4(+). Its pathway is nitrogen metabolism; urea degradation; CO(2) and NH(3) from urea (urease route): step 1/1. The chain is Urease subunit gamma from Geobacillus kaustophilus (strain HTA426).